The chain runs to 240 residues: Arginine transport ATP-binding protein ArtM (240 aa).

Residues 2 to 236 (IKVEKLSKSF…PKSKRAQDFL (235 aa)) enclose the ABC transporter domain. 34–41 (GPSGSGKS) serves as a coordination point for ATP.

It belongs to the ABC transporter superfamily.

It is found in the cell membrane. Its function is as follows. Part of a binding-protein-dependent transport system for arginine. Probably responsible for energy coupling to the transport system. The polypeptide is Arginine transport ATP-binding protein ArtM (artM) (Bacillus subtilis (strain 168)).